The primary structure comprises 292 residues: RNA 5'-monophosphate methyltransferase (292 aa).

Residues 1-20 (MAVPTELHGGSVKETAAEKE) form a disordered region. S-adenosyl-L-methionine contacts are provided by residues Arg-46, Asn-76, Asp-110, 135–136 (DF), and Met-164. The region spanning 53 to 274 (ELLRQLFPES…KQTIETHPIP (222 aa)) is the Bin3-type SAM domain.

This sequence belongs to the methyltransferase superfamily. In terms of assembly, interacts with DICER1; the interaction may be mediated by RNA.

It is found in the cytoplasm. It catalyses the reaction a 5'-end 5'-phospho-ribonucleoside-RNA + S-adenosyl-L-methionine = a 5'-end (5'-methylphospho)-ribonucleoside-RNA + S-adenosyl-L-homocysteine. The enzyme catalyses a 5'-end 5'-phospho-ribonucleoside-RNA + 2 S-adenosyl-L-methionine = a 5'-end (5'-bismethylphospho)-ribonucleoside-RNA + 2 S-adenosyl-L-homocysteine. In terms of biological role, O-methyltransferase that specifically monomethylates 5'-monophosphate of cytoplasmic histidyl tRNA (tRNA(His)), acting as a capping enzyme by protecting tRNA(His) from cleavage by DICER1. Also able, with less efficiently, to methylate the 5' monophosphate of a subset of pre-miRNAs, acting as a negative regulator of miRNA processing. The 5' monophosphate of pre-miRNAs is recognized by DICER1 and is required for pre-miRNAs processing: methylation at this position reduces the processing of pre-miRNAs by DICER1. Was also reported to mediate dimethylation of pre-miR-145; however dimethylation cannot be reproduced by another group which observes a monomethylation of pre-miR-145. This chain is RNA 5'-monophosphate methyltransferase (BCDIN3D), found in Pongo abelii (Sumatran orangutan).